The sequence spans 143 residues: FAD synthase (143 aa).

Residues 13 to 14, 18 to 21, and Asp-96 each bind ATP; these read TF and HPGH.

This sequence belongs to the archaeal FAD synthase family. As to quaternary structure, homodimer. A divalent metal cation serves as cofactor.

The catalysed reaction is FMN + ATP + H(+) = FAD + diphosphate. It participates in cofactor biosynthesis; FAD biosynthesis; FAD from FMN: step 1/1. Functionally, catalyzes the transfer of the AMP portion of ATP to flavin mononucleotide (FMN) to produce flavin adenine dinucleotide (FAD) coenzyme. This is FAD synthase from Methanothrix thermoacetophila (strain DSM 6194 / JCM 14653 / NBRC 101360 / PT) (Methanosaeta thermophila).